Consider the following 448-residue polypeptide: Nucleoprotein (448 aa).

A disordered region spans residues 1–55; it reads MSFTPGKQSSSRASSGNRSGNGILKWADQSDQSRNVQTRGRRAQSKQTATSQQPS. Positions 9 to 22 are enriched in low complexity; sequence SSSRASSGNRSGNG. Polar residues-rich tracts occupy residues 29 to 38 and 45 to 55; these read QSDQSRNVQT and SKQTATSQQPS. The interval 52 to 194 is RNA-binding; it reads QQPSGGNVVP…GYYIEGSGRS (143 aa). Residues 61–190 enclose the CoV N NTD domain; that stretch reads PYYSWFSGIT…VLPQGYYIEG (130 aa). The RNA site is built by Arg106, Arg122, and Arg164. 2 disordered regions span residues 158–231 and 383–420; these read PADI…VTPD and QDGTMNMSPKPQRQRGQKNGQGENDNISVAAPKSRVQQ. Residue Ser167 is modified to Phosphoserine; by host. Residue Thr174 is modified to Phosphothreonine; by host. The residue at position 191 (Ser191) is a Phosphoserine; by host. The segment covering 193–223 has biased composition (low complexity); the sequence is RSAPNSRSTSRASSRASSAGSRSRANSGNRT. In terms of domain architecture, CoV N CTD spans 259 to 384; sequence AKEIRQKILN…ENLNAYQQQD (126 aa). Residues 266 to 384 form a dimerization region; that stretch reads ILNKPRQKRS…ENLNAYQQQD (119 aa). 2 stretches are compositionally biased toward polar residues: residues 383–393 and 399–409; these read QDGTMNMSPKP and QKNGQGENDNI. Ser390 is modified (phosphoserine; by host). At Thr427 the chain carries Phosphothreonine; by host.

Belongs to the betacoronavirus nucleocapsid protein family. As to quaternary structure, homooligomer. Both monomeric and oligomeric forms interact with RNA. Interacts with protein M. Interacts with NSP3; this interaction serves to tether the genome to the newly translated replicase-transcriptase complex at a very early stage of infection. ADP-ribosylated. The ADP-ribosylation is retained in the virion during infection. Post-translationally, phosphorylated on serine and threonine residues.

The protein localises to the virion. The protein resides in the host endoplasmic reticulum-Golgi intermediate compartment. It is found in the host Golgi apparatus. Packages the positive strand viral genome RNA into a helical ribonucleocapsid (RNP) and plays a fundamental role during virion assembly through its interactions with the viral genome and membrane protein M. Plays an important role in enhancing the efficiency of subgenomic viral RNA transcription as well as viral replication. The protein is Nucleoprotein of Bovine coronavirus (strain 98TXSF-110-LUN) (BCoV-LUN).